A 270-amino-acid chain; its full sequence is Hydroxyethylthiazole kinase (270 aa).

A substrate-binding site is contributed by Met-46. Positions 120 and 166 each coordinate ATP. Position 193 (Gly-193) interacts with substrate.

This sequence belongs to the Thz kinase family. Mg(2+) is required as a cofactor.

The enzyme catalyses 5-(2-hydroxyethyl)-4-methylthiazole + ATP = 4-methyl-5-(2-phosphooxyethyl)-thiazole + ADP + H(+). The protein operates within cofactor biosynthesis; thiamine diphosphate biosynthesis; 4-methyl-5-(2-phosphoethyl)-thiazole from 5-(2-hydroxyethyl)-4-methylthiazole: step 1/1. Catalyzes the phosphorylation of the hydroxyl group of 4-methyl-5-beta-hydroxyethylthiazole (THZ). This chain is Hydroxyethylthiazole kinase, found in Herpetosiphon aurantiacus (strain ATCC 23779 / DSM 785 / 114-95).